Here is a 185-residue protein sequence, read N- to C-terminus: Transcriptional repressor NrdR (185 aa).

Positions 1 to 24 (MRCPFCGGPDTQVKDSRPSEDSSA) are disordered. A zinc finger spans residues 3–34 (CPFCGGPDTQVKDSRPSEDSSAIRRRRVCPDC). Basic and acidic residues predominate over residues 12 to 24 (QVKDSRPSEDSSA). One can recognise an ATP-cone domain in the interval 49-139 (LVVLKRSGKR…VYKNFREAQD (91 aa)). The interval 149–185 (ERLEGEGDLPEDGEAAPAPPDEVVAAPRRGRPARKRA) is disordered. Positions 176 to 185 (RRGRPARKRA) are enriched in basic residues.

This sequence belongs to the NrdR family. Zn(2+) is required as a cofactor.

Functionally, negatively regulates transcription of bacterial ribonucleotide reductase nrd genes and operons by binding to NrdR-boxes. The chain is Transcriptional repressor NrdR from Methylorubrum extorquens (strain PA1) (Methylobacterium extorquens).